The primary structure comprises 281 residues: Hepatitis A virus cellular receptor 2 homolog (281 aa).

An N-terminal signal peptide occupies residues 1–19 (MFSGLTLNCVLLLLQLLLA). In terms of domain architecture, Ig-like V-type spans 20–125 (RSLENAYVFE…PGLMNDKKLE (106 aa)). The Extracellular portion of the chain corresponds to 20–193 (RSLENAYVFE…KDSGETIRTA (174 aa)). 3 disulfides stabilise this stretch: Cys38-Cys111, Cys52-Cys63, and Cys58-Cys110. 2 residues coordinate a 1,2-diacyl-sn-glycero-3-phospho-L-serine: Ser61 and Gln62. Residues Asn74 and Asn100 are each glycosylated (N-linked (GlcNAc...) asparagine). Arg112 lines the a 1,2-diacyl-sn-glycero-3-phospho-L-serine pocket. Residues Phe115 and Gly117 each contribute to the Ca(2+) site. An a 1,2-diacyl-sn-glycero-3-phospho-L-serine-binding site is contributed by Met119. Residue Asn120 coordinates Ca(2+). Residues 139–160 (QTAHGDSTTASPRTLTTERNGS) form a disordered region. O-linked (GalNAc...) threonine glycosylation is present at Thr146. Asn172 carries an N-linked (GlcNAc...) asparagine glycan. The helical transmembrane segment at 194 to 214 (IHIGVGVSAGLTLALIIGVLI) threads the bilayer. The Cytoplasmic segment spans residues 215–281 (LKWYSCKKKK…YCYVNSQQPS (67 aa)). Positions 252 to 270 (EENIYTIEENVYEVENSNE) are interaction with BAG6. The residue at position 256 (Tyr256) is a Phosphotyrosine; by ITK.

The protein belongs to the immunoglobulin superfamily. TIM family. As to quaternary structure, interacts with HMGB1; impairs HMGB1 binding to B-DNA and likely HMGB1-mediated innate immune response. Interacts with BAG6. Interacts (phosphorylated) with PIK3R1 and PIK3R2. Interacts (not dependent on its phosphorylation status) with FYN. Interacts (in basal state T-cells) with VAV1; AKT1/2, LCP2, ZAP70, SYK, PIK3R1, FYN, SH3BP2 and SH2D2A. Interacts (in activated T-cells) with LCK and PLCG. Interacts with ILF3; this interaction promotes ILF3 ubiquitination and degradation. Phosphorylated on tyrosine residues; modestly increased after TCR/CD28 stimulation. Can be phosphorylated in the cytoplasmic domain by FYN. Phosphorylation at Tyr-256 is increased by stimulation with ligand LGALS9. Post-translationally, N-glycosylated. Expressed in T-helper type 1 lymphocytes. Not expressed by naive T-cells but up-regulated as they differentiate into T-helper-1 cells. Also expressed by differentiated type 1 CD8+ cytotoxic T-cells. Expressed on peritoneal exudate macrophages, monocytes, and splenic dendritic cells (DCs). Expression on natural killer (NK) cells is inversely associated with IFN-gamma production during the initial 24 hours of LPS-induced endotoxic shock. Expressed on mast cells.

The protein resides in the membrane. It localises to the cell junction. Its subcellular location is the secreted. Functionally, cell surface receptor implicated in modulating innate and adaptive immune responses. Generally accepted to have an inhibiting function. Reports on stimulating functions suggest that the activity may be influenced by the cellular context and/or the respective ligand. Regulates macrophage activation. Inhibits T-helper type 1 lymphocyte (Th1)-mediated auto- and alloimmune responses and promotes immunological tolerance. In CD8+ cells attenuates TCR-induced signaling, specifically by blocking NF-kappaB and NFAT promoter activities resulting in the loss of IL-2 secretion. The function may implicate its association with LCK proposed to impair phosphorylation of TCR subunits. In contrast, shown to activate TCR-induced signaling in T-cells probably implicating ZAP70, LCP2, LCK and FYN. Expressed on Treg cells can inhibit Th17 cell responses. Receptor for LGALS9. Binding to LGALS9 is believed to result in suppression of T-cell responses; the resulting apoptosis of antigen-specific cells may implicate HAVCR2 phosphorylation and disruption of its association with BAG6. Binding to LGALS9 is proposed to be involved in innate immune response to intracellular pathogens. Expressed on Th1 cells interacts with LGALS9 expressed on Mycobacterium tuberculosis-infected macrophages to stimulate antibactericidal activity including IL-1 beta secretion and to restrict intracellular bacterial growth. However, the function as receptor for LGALS9 has been challenged. Also reported to enhance CD8+ T-cell responses to an acute infection such as by Listeria monocytogenes. Receptor for phosphatidylserine (PtSer); PtSer-binding is calcium-dependent. May recognize PtSer on apoptotic cells leading to their phagocytosis. Mediates the engulfment of apoptotic cells by dendritic cells. Expressed on T-cells, promotes conjugation but not engulfment of apoptotic cells. Expressed on dendritic cells (DCs) positively regulates innate immune response and in synergy with Toll-like receptors promotes secretion of TNF-alpha. In tumor-imfiltrating DCs suppresses nucleic acid-mediated innate immune repsonse by interaction with HMGB1 and interfering with nucleic acid-sensing and trafficking of nucleid acids to endosomes. Can enhance mast cell production of Th2 cytokines Il-4, IL-6 and IL-13. Expressed on natural killer (NK) cells acts as a coreceptor to enhance IFN-gamma production in response to LGALS9. In contrast, shown to suppress NK cell-mediated cytotoxicity. Negatively regulates NK cell function in LPS-induced endotoxic shock. The sequence is that of Hepatitis A virus cellular receptor 2 homolog (Havcr2) from Mus musculus (Mouse).